The following is a 125-amino-acid chain: MPTINQLVRQGRTVEVVKSKSPAMENCPQRRGVCTRVYTTTPKKPNSALRKVAKVRLTNGFEVISYIGGEGHNLQEHSVVLVRGGRVKDLPGVRYHIVRGSLDLQGVKDRKQSRSKYGAKKPKAK.

D89 carries the post-translational modification 3-methylthioaspartic acid. Residues 105–125 (QGVKDRKQSRSKYGAKKPKAK) form a disordered region. A compositionally biased stretch (basic residues) spans 113 to 125 (SRSKYGAKKPKAK).

The protein belongs to the universal ribosomal protein uS12 family. As to quaternary structure, part of the 30S ribosomal subunit. Contacts proteins S8 and S17. May interact with IF1 in the 30S initiation complex.

Its function is as follows. With S4 and S5 plays an important role in translational accuracy. Interacts with and stabilizes bases of the 16S rRNA that are involved in tRNA selection in the A site and with the mRNA backbone. Located at the interface of the 30S and 50S subunits, it traverses the body of the 30S subunit contacting proteins on the other side and probably holding the rRNA structure together. The combined cluster of proteins S8, S12 and S17 appears to hold together the shoulder and platform of the 30S subunit. The sequence is that of Small ribosomal subunit protein uS12 from Delftia acidovorans (strain DSM 14801 / SPH-1).